A 367-amino-acid polypeptide reads, in one-letter code: Cytochrome b (367 aa).

Helical transmembrane passes span 33-53 (FGSL…FLAM), 77-98 (WVLR…YLHI), 113-133 (WNMG…GYVL), and 178-198 (FFAF…VHLL). Positions 83 and 97 each coordinate heme b. Heme b contacts are provided by His-182 and His-196. His-201 contacts a ubiquinone. The next 4 helical transmembrane spans lie at 226–246 (IKDI…VLFS), 288–308 (LGGV…PFLH), 320–340 (FSQC…WIGG), and 347–367 (YIII…VIMP).

Belongs to the cytochrome b family. As to quaternary structure, the cytochrome bc1 complex contains 11 subunits: 3 respiratory subunits (MT-CYB, CYC1 and UQCRFS1), 2 core proteins (UQCRC1 and UQCRC2) and 6 low-molecular weight proteins (UQCRH/QCR6, UQCRB/QCR7, UQCRQ/QCR8, UQCR10/QCR9, UQCR11/QCR10 and a cleavage product of UQCRFS1). This cytochrome bc1 complex then forms a dimer. It depends on heme b as a cofactor.

Its subcellular location is the mitochondrion inner membrane. Component of the ubiquinol-cytochrome c reductase complex (complex III or cytochrome b-c1 complex) that is part of the mitochondrial respiratory chain. The b-c1 complex mediates electron transfer from ubiquinol to cytochrome c. Contributes to the generation of a proton gradient across the mitochondrial membrane that is then used for ATP synthesis. The polypeptide is Cytochrome b (MT-CYB) (Hypsugo savii (Savi's pipistrelle)).